A 289-amino-acid polypeptide reads, in one-letter code: uncharacterized protein (289 aa).

9 consecutive transmembrane segments (helical) span residues 13 to 32 (INFA…LSGS), 37 to 59 (LIIS…HLND), 80 to 99 (IVTE…IFFI), 104 to 121 (EIAL…WLYS), 141 to 160 (VFTY…TIFS), 165 to 183 (VGVV…GFFL), 203 to 225 (VLSP…FVVI), 235 to 252 (TSSL…FAIY), and 265 to 287 (IISS…AIGC).

It localises to the cell membrane. This is an uncharacterized protein from Archaeoglobus fulgidus (strain ATCC 49558 / DSM 4304 / JCM 9628 / NBRC 100126 / VC-16).